A 969-amino-acid polypeptide reads, in one-letter code: MSTDNSQKDEGVPLLSPYSSSPQLRKKKRNQKRRKDKFVGHLKSDSRRPTQLLHDNLQHNHGQITDFDQIDSWGMLHESDSTSNDIIKSEDPSLKGAFIDHRPSMSQPREGPQSVSSTVQPQPIMKFSTPSYKKPAGLRPSDQNRSLVSDLSPSELESWLKRRKSVHKSFVDENSPTDRRQSNANNDVVIDVDALMNHVNNNASTGVNDNSKRRKKKRGSDDSSNKNSKSTSSDSNDEEDEYNSRPSSSLSSNNSSLDDVCLVLDDEGSEVPKAWPDCTVLEEFSKEETERLRSQAIQDAEAFHFQYDEDEEDGTSNEDGILFSKPIVTNIDVPELGNRRVNETENLKNGRLRPKRIAPWHLIQRPMVLGSNSTKDSKSRIQSGLQDNLLVGRNIQYPPHIISNNPEHFRFTYFRVDLDSTVHSPTISGLLQPGQKFQDLFVASIYSQDNSAGHIKTHPNSPTPGIKAETVSQLQGLTAKNPSTLSSMSVANIEDVPPFWLDVSNPTEEEMKILSKAFGIHPLTTEDIFLGEVREKVELFRDYYLICFRSFDIVAEKHVRRRRKEKQESATLDHESISRRKSQAYGATMSNESNANNNNSTSNASRSKWLPSILRARRRSSANRTTNTSSSSYKRRVKSEKKKMEENEKFKRKSGDRHKPREGELEPLNVYIIVFRTGVLTFHFAPTPHPINVRRRARLLKDYLNVTSDWIAYALIDDITDAFAPMIELIEDEVYEIEDAILKMHQSDDSSDSDSSDSDSDSGASDEDAFPFDVYSKKTSYSSAKSSVSSRSMSTSEASFNANLIGWKRKGDMLRRIGECRKRVMSILRLLGSKADVIKGFAKRYNEQWEASPQSEIAMYLGDIQDHIVTMVSSLNHYEKLLSRSHSNYLAQINIDMTKVNNDMNDVLGKITILGTIVLPMNVITGLWGMNVIVPGQYRDSLTWFIGIVLFMCMLACSAYMYTKRRFGF.

Over residues 1-11 the composition is skewed to basic and acidic residues; it reads MSTDNSQKDEG. 4 disordered regions span residues 1–49, 96–153, 167–186, and 199–256; these read MSTD…SRRP, GAFI…DLSP, HKSF…NANN, and VNNN…NNSS. Residues 1–912 are Cytoplasmic-facing; it reads MSTDNSQKDE…DMNDVLGKIT (912 aa). Residues 13–23 show a composition bias toward low complexity; it reads PLLSPYSSSPQ. Residues 24–36 show a composition bias toward basic residues; sequence LRKKKRNQKRRKD. Positions 37–48 are enriched in basic and acidic residues; that stretch reads KFVGHLKSDSRR. A Phosphoserine modification is found at Ser-114. Residues 141 to 152 are compositionally biased toward polar residues; it reads SDQNRSLVSDLS. The residue at position 175 (Ser-175) is a Phosphoserine. Thr-177 bears the Phosphothreonine mark. Ser-182 is subject to Phosphoserine. Low complexity-rich tracts occupy residues 225–234 and 244–256; these read NKNSKSTSSD and SRPS…NNSS. Ser-383 carries the post-translational modification Phosphoserine. Disordered stretches follow at residues 559–662 and 746–769; these read VRRR…KPRE and QSDD…DEDA. Positions 565–578 are enriched in basic and acidic residues; the sequence is EKQESATLDHESIS. Residue Thr-571 is modified to Phosphothreonine. Ser-576 and Ser-582 each carry phosphoserine. Low complexity-rich tracts occupy residues 590-607 and 622-632; these read SNES…ASRS and ANRTTNTSSSS. Residues 749–769 are compositionally biased toward acidic residues; it reads DSSDSDSSDSDSDSGASDEDA. A helical membrane pass occupies residues 913–933; it reads ILGTIVLPMNVITGLWGMNVI. Over 934 to 941 the chain is Extracellular; the sequence is VPGQYRDS. Residues 942-962 form a helical membrane-spanning segment; sequence LTWFIGIVLFMCMLACSAYMY. Residues 963–969 lie on the Cytoplasmic side of the membrane; that stretch reads TKRRFGF.

This sequence belongs to the CorA metal ion transporter (MIT) (TC 1.A.35) family.

It localises to the membrane. This chain is Manganese resistance protein MNR2 (MNR2), found in Saccharomyces cerevisiae (strain ATCC 204508 / S288c) (Baker's yeast).